The chain runs to 233 residues: MSFLIVANWKMNGTRSLFVNFIGKLNDKSNEITSKLVICPPFTSLPGNIELNSNISIGAQNCHYKKSGSYTGEISAEMLKELGCTYVILGHSERTHETNGEIKLKSETAIESGLHPIICVGENLEDRESSKTKEVVEYQCKSRLPIHGEYTVAYEPIWAIGTGHVPSNNAIAEVIEVIQSYTSKKHVIYGGSVSLENIENLSNILNLSGVLIGSASLDFDRFHKIVQQVEKAY.

8–10 contributes to the substrate binding site; sequence NWK. The Electrophile role is filled by His-91. Glu-155 serves as the catalytic Proton acceptor. Positions 161 and 192 each coordinate substrate.

This sequence belongs to the triosephosphate isomerase family. In terms of assembly, homodimer.

It localises to the cytoplasm. The enzyme catalyses D-glyceraldehyde 3-phosphate = dihydroxyacetone phosphate. The protein operates within carbohydrate biosynthesis; gluconeogenesis. Its pathway is carbohydrate degradation; glycolysis; D-glyceraldehyde 3-phosphate from glycerone phosphate: step 1/1. Functionally, involved in the gluconeogenesis. Catalyzes stereospecifically the conversion of dihydroxyacetone phosphate (DHAP) to D-glyceraldehyde-3-phosphate (G3P). The polypeptide is Triosephosphate isomerase (Wolbachia sp. subsp. Brugia malayi (strain TRS)).